The chain runs to 251 residues: 3-deoxy-manno-octulosonate cytidylyltransferase (251 aa).

This sequence belongs to the KdsB family.

Its subcellular location is the cytoplasm. It carries out the reaction 3-deoxy-alpha-D-manno-oct-2-ulosonate + CTP = CMP-3-deoxy-beta-D-manno-octulosonate + diphosphate. It functions in the pathway nucleotide-sugar biosynthesis; CMP-3-deoxy-D-manno-octulosonate biosynthesis; CMP-3-deoxy-D-manno-octulosonate from 3-deoxy-D-manno-octulosonate and CTP: step 1/1. Its pathway is bacterial outer membrane biogenesis; lipopolysaccharide biosynthesis. Its function is as follows. Activates KDO (a required 8-carbon sugar) for incorporation into bacterial lipopolysaccharide in Gram-negative bacteria. This is 3-deoxy-manno-octulosonate cytidylyltransferase from Chlorobium luteolum (strain DSM 273 / BCRC 81028 / 2530) (Pelodictyon luteolum).